We begin with the raw amino-acid sequence, 453 residues long: Serine/threonine-protein phosphatase 2A 55 kDa regulatory subunit B delta isoform (453 aa).

WD repeat units lie at residues 32–71 (AEAD…KGRA), 97–138 (EIEE…KRAE), 181–219 (AHTY…RSFN), and 230–270 (ELTE…LCDR). Position 285 is a phosphoserine (serine 285). 3 WD repeats span residues 289–327 (EIIS…RPVE), 344–385 (ENDC…DVTL), and 420–452 (DFNK…QDKI). Tyrosine 305 is subject to Phosphotyrosine. Residue threonine 308 is modified to Phosphothreonine. The interval 385–406 (LEASRENSKPRASLKPRKVCSG) is disordered.

Belongs to the phosphatase 2A regulatory subunit B family. In terms of assembly, PP2A consists of a common heterodimeric core enzyme, composed of a 36 kDa catalytic subunit (subunit C) and a 65 kDa constant regulatory subunit (PR65 or subunit A), that associates with a variety of regulatory subunits. Proteins that associate with the core dimer include three families of regulatory subunits B (the R2/B/PR55/B55, R3/B''/PR72/PR130/PR59 and R5/B'/B56 families), the 48 kDa variable regulatory subunit, viral proteins, and cell signaling molecules. Interacts with ENSA (when phosphorylated at 'Ser-67') and ARPP19 (when phosphorylated at 'Ser-62'), leading to inhibit PP2A activity. Interacts with IER5. As to expression, widely expressed with high levels in brain, heart, placenta, skeletal muscle, testis, thymus and spleen.

The protein resides in the cytoplasm. Its function is as follows. Substrate-recognition subunit of protein phosphatase 2A (PP2A) that plays a key role in cell cycle by controlling mitosis entry and exit. Involved in chromosome clustering during late mitosis by mediating dephosphorylation of MKI67. The activity of PP2A complexes containing PPP2R2D (PR55-delta) fluctuate during the cell cycle: the activity is high in interphase and low in mitosis. This chain is Serine/threonine-protein phosphatase 2A 55 kDa regulatory subunit B delta isoform (Ppp2r2d), found in Rattus norvegicus (Rat).